We begin with the raw amino-acid sequence, 145 residues long: MIALIQRVSQASVTVNGEIIGEIEKGLLVFLAIEPLDNEQKAKRLAERVAGYRVFNDENDKMNLNVKQAEGNILVVSQFTLAADTSSGMRPSFTTAAKPEFSNHLYQFFVTQLRDKGFDVPTGEFAADMKVALINDGPVTFTLTI.

The short motif at 137–138 (GP) is the Gly-cisPro motif, important for rejection of L-amino acids element.

Belongs to the DTD family. As to quaternary structure, homodimer.

Its subcellular location is the cytoplasm. It carries out the reaction glycyl-tRNA(Ala) + H2O = tRNA(Ala) + glycine + H(+). The catalysed reaction is a D-aminoacyl-tRNA + H2O = a tRNA + a D-alpha-amino acid + H(+). Its function is as follows. An aminoacyl-tRNA editing enzyme that deacylates mischarged D-aminoacyl-tRNAs. Also deacylates mischarged glycyl-tRNA(Ala), protecting cells against glycine mischarging by AlaRS. Acts via tRNA-based rather than protein-based catalysis; rejects L-amino acids rather than detecting D-amino acids in the active site. By recycling D-aminoacyl-tRNA to D-amino acids and free tRNA molecules, this enzyme counteracts the toxicity associated with the formation of D-aminoacyl-tRNA entities in vivo and helps enforce protein L-homochirality. The chain is D-aminoacyl-tRNA deacylase from Colwellia psychrerythraea (strain 34H / ATCC BAA-681) (Vibrio psychroerythus).